The chain runs to 411 residues: Lissencephaly-1 homolog (411 aa).

The 33-residue stretch at 7-39 (QREELNKAIADYLASNGFMEALESFKKETDMPG) folds into the LisH domain. Residues 54–80 (TSVIRLQKKVMDLEGRLAEAEKEYISG) adopt a coiled-coil conformation. The span at 77-89 (YISGTPSREKRSP) shows a compositional bias: basic and acidic residues. Residues 77–96 (YISGTPSREKRSPTEWIPRP) are disordered. 7 WD repeats span residues 104-145 (GHRA…RTIK), 146-187 (GHTD…RTMH), 188-227 (GHDHNVSSVCFLPSGDHVVSCSRDKSIKMWEVATGYCVRT), 230-269 (GHRDWVRMVRVNSDGSLLASCSNDQTVRVWVVGTKECKLE), 272-334 (EHDH…ALFT), 337-376 (GHDNWVRGVKFHPGGKYLLSASDDKTLRVWELAHQRCCKT), and 379-411 (AHSHFCTSLDFHRTAPYVVTGSVDQTVKVWECR).

This sequence belongs to the WD repeat LIS1/nudF family.

It is found in the cytoplasm. It localises to the cytoskeleton. The protein resides in the microtubule organizing center. The protein localises to the centrosome. Positively regulates the activity of the minus-end directed microtubule motor protein dynein. May enhance dynein-mediated microtubule sliding by targeting dynein to the microtubule plus end. Required for several dynein- and microtubule-dependent processes. This chain is Lissencephaly-1 homolog, found in Ixodes scapularis (Black-legged tick).